Here is an 89-residue protein sequence, read N- to C-terminus: uncharacterized protein (89 aa).

The signal sequence occupies residues 1–27 (MKKAAAVLLSLGLVFGFSYGAGHVAEA).

This is an uncharacterized protein from Bacillus subtilis (strain 168).